The primary structure comprises 46 residues: Large ribosomal subunit protein bL36 (46 aa).

Belongs to the bacterial ribosomal protein bL36 family.

The sequence is that of Large ribosomal subunit protein bL36 from Photorhabdus laumondii subsp. laumondii (strain DSM 15139 / CIP 105565 / TT01) (Photorhabdus luminescens subsp. laumondii).